We begin with the raw amino-acid sequence, 320 residues long: Elongation factor Ts (320 aa).

Residues 82–85 (TDFV) form an involved in Mg(2+) ion dislocation from EF-Tu region.

The protein belongs to the EF-Ts family.

It is found in the cytoplasm. Functionally, associates with the EF-Tu.GDP complex and induces the exchange of GDP to GTP. It remains bound to the aminoacyl-tRNA.EF-Tu.GTP complex up to the GTP hydrolysis stage on the ribosome. This is Elongation factor Ts from Flavobacterium johnsoniae (strain ATCC 17061 / DSM 2064 / JCM 8514 / BCRC 14874 / CCUG 350202 / NBRC 14942 / NCIMB 11054 / UW101) (Cytophaga johnsonae).